A 677-amino-acid chain; its full sequence is DNA ligase (677 aa).

Residues 36-40, 85-86, and glutamate 122 contribute to the NAD(+) site; these read DAEYD and SI. Lysine 124 functions as the N6-AMP-lysine intermediate in the catalytic mechanism. Positions 145, 181, 298, and 322 each coordinate NAD(+). Zn(2+) contacts are provided by cysteine 416, cysteine 419, cysteine 434, and cysteine 440. Positions 600–677 constitute a BRCT domain; it reads LTPRPLAGKT…DEAALRALLD (78 aa).

This sequence belongs to the NAD-dependent DNA ligase family. LigA subfamily. The cofactor is Mg(2+). Requires Mn(2+) as cofactor.

The enzyme catalyses NAD(+) + (deoxyribonucleotide)n-3'-hydroxyl + 5'-phospho-(deoxyribonucleotide)m = (deoxyribonucleotide)n+m + AMP + beta-nicotinamide D-nucleotide.. Its function is as follows. DNA ligase that catalyzes the formation of phosphodiester linkages between 5'-phosphoryl and 3'-hydroxyl groups in double-stranded DNA using NAD as a coenzyme and as the energy source for the reaction. It is essential for DNA replication and repair of damaged DNA. This is DNA ligase from Methylibium petroleiphilum (strain ATCC BAA-1232 / LMG 22953 / PM1).